A 729-amino-acid chain; its full sequence is MAKITKEIVFGNHKLILETGEVARQADGAVMASMNGTQVLVTVVWKKDGGESNDFFPLTVNYQEKFYAIGKIPGGFNKREGRPSDNETLISRLIDRPIRPLFPDNFFNEVQIIATVLSLNPEVSPDIIAMIGASAALSISGVPFNGPIGAARVGYKDGVYLLNPSRKEQEESKLDLVIAGTKDAILMVESEAQELSEDIMRGAMLYGHEMMKNVIKSIEELARDVGKSKPEWKAPEIDTVLKARINDVARNEVEAAYLIKDKQQRYQRLDELREQTISALLAENDELNADVIANMFGELERSIVRNRILDGEPRIDGRDHRTVRPISIRTKFLERTHGSCLFTRGETQAIVVATLGNERDAQILDGISGESRDRFMLHYNFPPYSVGETGQVGSPKRREIGHGRLAKRALMAVLPDANEFPYVLRIVSEITESNGSSSMATVCGTSLALMDAGVPLKAPVAGVAMGLIKEGDRYAVLTDILGDEDHLGDMDFKVAGTEKGITALQMDIKISGITNEIMEQALEQALEGRTHILGVMNNALAEHRTELSQHAPRITTMKVAEDKIRTIIGKGGATIKGLIESTGVSIDIDDSGVVQLFSPDKMALEEAQKQIKALIAEIEVGQTYQGKVSKIVDFGAFINLLPGKDGLLHISQICADRTQKVEEVLQEGQEIEVFVAGIDKQGRVKLEWKDKPQAEAKEVEDAPVSATFLTMEEQSEEINSGNKISEEEE.

Residues aspartate 485 and aspartate 491 each contribute to the Mg(2+) site. Positions proline 552 to isoleucine 611 constitute a KH domain. One can recognise an S1 motif domain in the interval glycine 621–lysine 689.

Belongs to the polyribonucleotide nucleotidyltransferase family. In terms of assembly, component of the RNA degradosome, which is a multiprotein complex involved in RNA processing and mRNA degradation. Mg(2+) serves as cofactor.

Its subcellular location is the cytoplasm. The enzyme catalyses RNA(n+1) + phosphate = RNA(n) + a ribonucleoside 5'-diphosphate. Its function is as follows. Involved in mRNA degradation. Catalyzes the phosphorolysis of single-stranded polyribonucleotides processively in the 3'- to 5'-direction. This Legionella pneumophila subsp. pneumophila (strain Philadelphia 1 / ATCC 33152 / DSM 7513) protein is Polyribonucleotide nucleotidyltransferase.